A 134-amino-acid polypeptide reads, in one-letter code: Fatty acid-binding protein 5 (134 aa).

The Nuclear localization signal motif lies at 23–33 (KELGVGMAMRK). Residues Arg109 and 129-131 (RVY) each bind hexadecanoate. Residues Arg109 and Tyr131 each coordinate N-eicosanoyl ethanolamine. Position 129-131 (129-131 (RVY)) interacts with (9Z,12Z)-octadecadienoate.

It belongs to the calycin superfamily. Fatty-acid binding protein (FABP) family. In terms of assembly, monomer.

The protein resides in the cytoplasm. The protein localises to the nucleus. It is found in the synapse. It localises to the postsynaptic density. Its subcellular location is the secreted. The catalysed reaction is hexadecanoate(out) = hexadecanoate(in). The enzyme catalyses (9Z,12Z)-octadecadienoate(out) = (9Z,12Z)-octadecadienoate(in). It catalyses the reaction (9Z)-octadecenoate(out) = (9Z)-octadecenoate(in). In terms of biological role, intracellular carrier for long-chain fatty acids and related active lipids, such as endocannabinoids, that regulate the metabolism and actions of the ligands they bind. In addition to the cytosolic transport, selectively delivers specific fatty acids from the cytosol to the nucleus, wherein they activate nuclear receptors. Delivers retinoic acid to the nuclear receptor peroxisome proliferator-activated receptor delta; which promotes proliferation and survival. May also serve as a synaptic carrier of endocannabinoid at central synapses and thus controls retrograde endocannabinoid signaling. Modulates inflammation by regulating PTGES induction via NF-kappa-B activation, and prostaglandin E2 (PGE2) biosynthesis during inflammation. Has the highest binding affinity for docosahexaenoic acid (DHA) and decreasing relative affinity for eicosapentaenoic acid (EPA), alpha-linolenic acid (ALA), oleic acid, palmitic acid, linoleic acid and stearic acid, respectively. The sequence is that of Fatty acid-binding protein 5 from Pygoscelis papua (Gentoo penguin).